The following is a 990-amino-acid chain: Presequence protease, mitochondrial (990 aa).

The transit peptide at M1 to T25 directs the protein to the mitochondrion. H89 lines the Zn(2+) pocket. The Proton acceptor role is filled by E92. H93 is a binding site for Zn(2+). Residue E165 is part of the active site. E190 contributes to the Zn(2+) binding site.

It belongs to the peptidase M16 family. PreP subfamily. Monomer and homodimer; homodimerization is induced by binding of the substrate. Zn(2+) is required as a cofactor.

Its subcellular location is the mitochondrion intermembrane space. The protein localises to the mitochondrion matrix. Its function is as follows. Degrades mitochondrial transit peptides after their cleavage in the intermembrane space or in the matrix, and presequence peptides; clearance of these peptides is required to keep the presequence processing machinery running. Preferentially cleaves the N-terminal side of paired basic amino acid residues. Also degrades other unstructured peptides. May function as an ATP-dependent peptidase as opposed to a metalloendopeptidase. This is Presequence protease, mitochondrial (CYM1) from Yarrowia lipolytica (strain CLIB 122 / E 150) (Yeast).